Consider the following 363-residue polypeptide: Dihydroorotate dehydrogenase (quinone) (363 aa).

FMN is bound by residues 77–81 (AGMDK) and T101. Position 81 (K81) interacts with substrate. 126-130 (NRMGF) contributes to the substrate binding site. 2 residues coordinate FMN: S155 and N188. N188 lines the substrate pocket. The active-site Nucleophile is the S191. N193 serves as a coordination point for substrate. The FMN site is built by K234 and T262. Residue 263–264 (NT) participates in substrate binding. Residues G287, G316, and 337-338 (YT) contribute to the FMN site.

Belongs to the dihydroorotate dehydrogenase family. Type 2 subfamily. In terms of assembly, monomer. FMN is required as a cofactor.

The protein resides in the cell membrane. It catalyses the reaction (S)-dihydroorotate + a quinone = orotate + a quinol. Its pathway is pyrimidine metabolism; UMP biosynthesis via de novo pathway; orotate from (S)-dihydroorotate (quinone route): step 1/1. Functionally, catalyzes the conversion of dihydroorotate to orotate with quinone as electron acceptor. The sequence is that of Dihydroorotate dehydrogenase (quinone) from Chloroflexus aurantiacus (strain ATCC 29366 / DSM 635 / J-10-fl).